Reading from the N-terminus, the 338-residue chain is Heat-inducible transcription repressor HrcA (338 aa).

Belongs to the HrcA family.

Functionally, negative regulator of class I heat shock genes (grpE-dnaK-dnaJ and groELS operons). Prevents heat-shock induction of these operons. The chain is Heat-inducible transcription repressor HrcA from Polaromonas sp. (strain JS666 / ATCC BAA-500).